Here is a 54-residue protein sequence, read N- to C-terminus: Rubredoxin (54 aa).

M1 carries the N-formylmethionine modification. The 54-residue stretch at 1–54 (MKKYTCTVCGYIYNPEDGDPDNGVNPGTDFKDIPDDWVCPLCGVGKDQFEEVEE) folds into the Rubredoxin-like domain. 4 residues coordinate Fe cation: C6, C9, C39, and C42.

It belongs to the rubredoxin family. The cofactor is Fe(3+).

Its function is as follows. Rubredoxin is a small nonheme, iron protein lacking acid-labile sulfide. Its single Fe, chelated to 4 Cys, functions as an electron acceptor and may also stabilize the conformation of the molecule. The chain is Rubredoxin from Clostridium pasteurianum.